The following is a 297-amino-acid chain: Coatomer subunit epsilon-2 (297 aa).

The protein belongs to the COPE family. In terms of assembly, oligomeric complex that consists of at least the alpha, beta, beta', gamma, delta, epsilon and zeta subunits.

It is found in the cytoplasm. It localises to the golgi apparatus membrane. The protein resides in the cytoplasmic vesicle. Its subcellular location is the COPI-coated vesicle membrane. Functionally, the coatomer is a cytosolic protein complex that binds to dilysine motifs and reversibly associates with Golgi non-clathrin-coated vesicles, which further mediate biosynthetic protein transport from the ER, via the Golgi up to the trans Golgi network. The coatomer complex is required for budding from Golgi membranes, and is essential for the retrograde Golgi-to-ER transport of dilysine-tagged proteins. The chain is Coatomer subunit epsilon-2 from Oryza sativa subsp. japonica (Rice).